A 200-amino-acid polypeptide reads, in one-letter code: Translation machinery-associated protein 22 (200 aa).

The region spanning 95–166 (VVIRREARTK…EVEAYIHSLL (72 aa)) is the SUI1 domain.

Belongs to the DENR family. In terms of assembly, interacts with the 40S ribosomal subunit.

The protein resides in the cytoplasm. This Kluyveromyces lactis (strain ATCC 8585 / CBS 2359 / DSM 70799 / NBRC 1267 / NRRL Y-1140 / WM37) (Yeast) protein is Translation machinery-associated protein 22 (TMA22).